We begin with the raw amino-acid sequence, 212 residues long: Thymidylate kinase (212 aa).

Residue 7–14 (GIEGSGKS) coordinates ATP.

It belongs to the thymidylate kinase family.

It catalyses the reaction dTMP + ATP = dTDP + ADP. Phosphorylation of dTMP to form dTDP in both de novo and salvage pathways of dTTP synthesis. The protein is Thymidylate kinase of Oleidesulfovibrio alaskensis (strain ATCC BAA-1058 / DSM 17464 / G20) (Desulfovibrio alaskensis).